The chain runs to 433 residues: Myricetin 3-O-glucosyl 1,2-rhamnoside 6'-O-caffeoyltransferase AT2 (433 aa).

Residues H157 and D375 each act as proton acceptor in the active site.

It belongs to the plant acyltransferase family. In terms of tissue distribution, expressed in young cromes.

It carries out the reaction myricetin 3-O-[beta-D-glucosyl-(1-&gt;2)-alpha-L-rhamnoside] + (E)-caffeoyl-CoA = myricetin 3-O-[(6-O-(E)-caffeoyl-beta-D-glucosyl)-(1-&gt;2)-alpha-L-rhamnoside] + CoA. It functions in the pathway flavonoid metabolism. In terms of biological role, caffeoyltransferase involved in montbretin A (MbA) biosynthesis. Catalyzes the caffeoylation of myricetin 3-O-beta-D-glucosyl 1,2-alpha-L-rhamnoside (MRG) to produce myricetin 3-O-(6'-O-caffeoyl)-beta-D-glucosyl 1,2-alpha-L-rhamnoside (mini-MbA), a precursor of MbA. Mini-MbA and MbA are potent inhibitors of human pancreatic alpha-amylase and are being developed as drug candidates to treat type-2 diabetes. In vitro, is able to catalyze the caffeoylation of quercetin 3-O-sophoroside (QGG), although QGG may not be a physiological substrate in vivo. In vitro, can use coumaryl-CoA, feruloyl-CoA and acetyl-CoA, although these three acyl donors may not be physiological in vivo. The protein is Myricetin 3-O-glucosyl 1,2-rhamnoside 6'-O-caffeoyltransferase AT2 of Crocosmia x crocosmiiflora (Montbretia).